The chain runs to 1344 residues: MAEMKSPTKAEPATPAEAAQSDRHSLLEHSREFLDFFWDIAKPDQETRLRATEKLLEYLRTRPNDSEMKYALKRLITGLGVGREAARPCYSLALAQLLQSFEDIPLCDILDQIQEKYSLQAMNKAMMRPSLFANLFGVLALFQSGRLVKDKEALMKSVQLLKILSQHPNHLQGQPIKALVDILSEVPESMFQEILPKVLKGNMKVILRSPKYLELFLLAKQRVPTKLESLMGSVDLFSEDNIPSLVNILKVAANSVKKEHKLPNVALDLLRLALKESRFELFWKKVLEEGLLKNPSWTSSYMCFRLLGASLPLLSEEQLQLVMRGDLIRHFGENMVISKPQNLFKIIPEISTYVGTFLEGCQDDPKRQLTMMVAFTTITNQGLPVMPTFWRVTRFLNAEALQSYVAWLRDMFLQPDLNSLVDFSTANQKRAQDASLNVPERAVFRLRKWIIHRLVSLVDHLHLEKDEAVVEQIARFCLFHAFFKTKKATPQIPETKQHFSFPLDDRNRGVFVSAFFSLLQTLSVKFRQTPDLAENGKPWTYRLVQLADMLLNHNRNVTSVTSLTTQQRQAWDQMMSTLKELEARSSETRAIAFQHLLLLVGLHIFKSPAESCDVLGDIQTCIKKSMEQNPRRSRSRAKASQEPVWVEVMVEILLSLLAQPSNLMRQVVRSVFGHICPHLTPRCLQLILAVLSPVTNEDEDDNVVVTDDADEKQLQHGEDEDSDNEDNKNSESDMDSEDGEESEEEDRDKDVDPGFRQQLMEVLKAGNALGGVDNEEEEELGDEAMMALDQNLASLFKEQKMRIQARNEEKNKLQKEKKLRRDFQIRALDLIEVLVTKQPEHPLILELLEPLLNVIQHSMRSKGSTKQEQDLLHKTARIFMHHLCRARRYCHEVGPCAEALHAQVERLVQQAGSQADASVALYYFNASLYLLRVLKGNTNKRHQDGHKLHGADTEDSEDQAANCLDLDFVTRVYSASLESLLTKRNSSLTVPMFLSLFSRYPVICKNLLPVLAQHVAGPSRPRHQAQACLMLQKTLSARELRVCFEDPEWEQLITQLLGKATQTLQTLGEAQSKGEHQKELSILELLNTLLRTVNHEKLSVDLTAPLGVLQSKQQKLQQSLQQGNHSSGSNRLYDLYWQAMRMLGVQRPKSEKKNAKDIPSDTQSPVSTKRKKKGFLPETKKRKKLKSEGTTPEKNAASQQDAVTEGAMPAATGKDQPPSTGKKKRKRVKASTPSQVNGITGAKSPAPSNPTLSPSTPAKTPKLQKKKEKLSQVNGATPVSPIEPESKKHHQEALSTKEVIRKSPHPQSALPKKRARLSLVSRSPSLLQSGVKKRRVASRRVQTP.

A disordered region spans residues 1-24 (MAEMKSPTKAEPATPAEAAQSDRH). At Ala2 the chain carries N-acetylalanine. An interaction with MYB region spans residues 2-580 (AEMKSPTKAE…WDQMMSTLKE (579 aa)). A compositionally biased stretch (low complexity) spans 7–19 (PTKAEPATPAEAA). 2 positions are modified to N6-acetyllysine: Lys69 and Lys156. Short sequence motifs (nuclear export signal) lie at residues 238–256 (SEDN…ANSV) and 261–279 (KLPN…ESRF). 2 disordered regions span residues 710 to 751 (DEKQ…DKDV) and 1146 to 1344 (QRPK…VQTP). Residues 732-747 (SDMDSEDGEESEEEDR) are compositionally biased toward acidic residues. Positions 1148 to 1159 (PKSEKKNAKDIP) are enriched in basic and acidic residues. A Glycyl lysine isopeptide (Lys-Gly) (interchain with G-Cter in SUMO2) cross-link involves residue Lys1149. Residues 1152–1344 (KKNAKDIPSD…RVASRRVQTP (193 aa)) are required for nuclear and nucleolar localization. 2 positions are modified to phosphoserine: Ser1160 and Ser1164. Basic residues predominate over residues 1168–1185 (TKRKKKGFLPETKKRKKL). Ser1187 carries the post-translational modification Phosphoserine. Polar residues predominate over residues 1188-1202 (EGTTPEKNAASQQDA). Thr1191 bears the Phosphothreonine mark. Ser1219 and Ser1244 each carry phosphoserine. The segment covering 1249-1258 (NPTLSPSTPA) has biased composition (polar residues). Phosphothreonine is present on Thr1251. Ser1253 is subject to Phosphoserine. 2 positions are modified to phosphothreonine: Thr1256 and Thr1277. Residues Ser1280, Ser1303, and Ser1318 each carry the phosphoserine modification. Positions 1317-1329 (LSLVSRSPSLLQS) are enriched in low complexity. Arg1322 carries the citrulline modification. 3 positions are modified to phosphoserine: Ser1323, Ser1325, and Ser1329.

It belongs to the MYBBP1A family. As to quaternary structure, component of the B-WICH complex, at least composed of SMARCA5/SNF2H, BAZ1B/WSTF, SF3B1, DEK, MYO1C, ERCC6, MYBBP1A and DDX21. Binds to and represses JUN and MYB via the leucine zipper regions present in these proteins. Also binds to and represses PPARGC1A: this interaction is abrogated when PPARGC1A is phosphorylated by MAPK1/ERK. Binds to and stimulates transcription by AHR. Binds to KPNA2. Interacts with CLOCK and CRY1. In terms of processing, citrullinated by PADI4. Ubiquitously expressed.

Its subcellular location is the nucleus. The protein localises to the nucleolus. It is found in the cytoplasm. May activate or repress transcription via interactions with sequence specific DNA-binding proteins. Repression may be mediated at least in part by histone deacetylase activity (HDAC activity). Acts as a corepressor and in concert with CRY1, represses the transcription of the core circadian clock component PER2. Preferentially binds to dimethylated histone H3 'Lys-9' (H3K9me2) on the PER2 promoter. Has a role in rRNA biogenesis together with PWP1. This chain is Myb-binding protein 1A (Mybbp1a), found in Mus musculus (Mouse).